Consider the following 825-residue polypeptide: Protein SEY1 homolog 2 (825 aa).

Positions 1–21 (MDEVSPTKHFTSKPLLPTKTP) are disordered. Residues 1–728 (MDEVSPTKHF…EKENSEIKYQ (728 aa)) lie on the Cytoplasmic side of the membrane. Residues 83–305 (GMDYNAVGIL…FLPQYNKEIP (223 aa)) form the GB1/RHD3-type G domain. Position 93–100 (93–100 (GAQSSGKS)) interacts with GTP. Residues 373–397 (KVFTKQIDAALERYKEVTERYMETI) adopt a coiled-coil conformation. A helical transmembrane segment spans residues 729 to 749 (IPLYLIVLVVFFGFDEFIAIL). The Lumenal segment spans residues 750-752 (TNP). A helical membrane pass occupies residues 753 to 773 (LLFILTLIIGGGVYIGYKLNL). Over 774 to 825 (GGVAKNYIQYLLSMSLSSTMEYLRTIPFFTPLIDKVWPKDDNNTEETQEEIK) the chain is Cytoplasmic.

Belongs to the TRAFAC class dynamin-like GTPase superfamily. GB1/RHD3 GTPase family. RHD3 subfamily.

It localises to the endoplasmic reticulum membrane. Its function is as follows. Probable GTP-binding protein that may be involved in cell development. This Entamoeba histolytica (strain ATCC 30459 / HM-1:IMSS / ABRM) protein is Protein SEY1 homolog 2.